Here is a 233-residue protein sequence, read N- to C-terminus: Purine nucleoside phosphorylase DeoD-type (233 aa).

A purine D-ribonucleoside is bound at residue histidine 4. Phosphate is bound by residues glycine 20, arginine 24, arginine 43, and 87 to 90 (RIGT). A purine D-ribonucleoside contacts are provided by residues 179–181 (EME) and 203–204 (SD). Aspartate 204 acts as the Proton donor in catalysis.

The protein belongs to the PNP/UDP phosphorylase family. As to quaternary structure, homohexamer; trimer of homodimers.

It carries out the reaction a purine D-ribonucleoside + phosphate = a purine nucleobase + alpha-D-ribose 1-phosphate. It catalyses the reaction a purine 2'-deoxy-D-ribonucleoside + phosphate = a purine nucleobase + 2-deoxy-alpha-D-ribose 1-phosphate. Catalyzes the reversible phosphorolytic breakdown of the N-glycosidic bond in the beta-(deoxy)ribonucleoside molecules, with the formation of the corresponding free purine bases and pentose-1-phosphate. The sequence is that of Purine nucleoside phosphorylase DeoD-type from Helicobacter acinonychis (strain Sheeba).